The primary structure comprises 447 residues: F-box only protein 5 (447 aa).

Phosphoserine is present on residues Ser94 and Ser102. Residues Ala135 to Val244 form an interaction with EVI5 region. The region spanning Leu250–Ser296 is the F-box domain. Residues Thr261–Lys339 are sufficient for interaction with RPS6KA2; Prevents association of CDC20 with RPS6KA2. Positions Thr261–Cys409 are requires for efficient binding to CDC20. Residues Asn305–Leu447 are inhibits APC ubiquitin ligase activity. Positions Arg322 to Leu325 are competitively blocks access of APC substrates to the D-box coreceptor formed by FZR1 and ANAPC10. Residues Leu337–Arg358 are disordered. Over residues Thr343–Ser357 the composition is skewed to polar residues. A ZBR-type zinc finger spans residues Ser374–Gly422. Zn(2+) is bound by residues Cys378, Cys381, Cys396, Cys401, Cys406, Cys409, His414, and Cys419. The segment at Cys378 to Ser420 is allows a rapid multiple mono-ubiquitination of the APC substrate, but strongly inhibits the slow ubiquitin chain elongation catalyzed by UBCH10. The segment at Thr437–Leu447 is sufficient to suppress UBE2S activity; essential for interaction with UBE2S; competitively inhibits the rapide ubiquitin chain elongation by UBE2D1 which blocks UBE2D1 with APC; indispensable for recruitment and position of FBXO5 to the catalytic site of APC; abrogates the inhibition of ubiquitin chain assembly primarily catalyzed by UBE2S; inhibits the ubiquitination by either UBE2C or UBE2D1.

In terms of assembly, part of a SCF (SKP1-cullin-F-box) protein ligase complex. Interacts with BTRC; mediates proteolysis by the SCF ubiquitin ligase complex leading to activation of APC in late mitosis and subsequent mitotic progression. Interacts with FZR1/CDH1 and the N-terminal substrate-binding domain of CDC20; prevents APC activation. Also interacts with EVI5 which blocks its phosphorylation by PLK1 and prevents its subsequent binding to BTRC and degradation. Interacts simultaneously with anaphase promoting complex (APC), through at least ANAPC2, CDC23, CDC27, the APC substrate GMNN and the APC activator FZR1. Interacts with UBE2S; interferes with the activity of UBE2S mainly by disrupting the dynamic electrostatic association between the C-terminal tail of UBE2S and ANAPC2. Interacts with RPS6KA2; cooperates to induce the metaphase arrest of early blastomeres; increases and stabilizes interaction of FBXO5 with CDC20. Phosphorylation by CDK2 and subsequently by PLK1 triggers degradation during early mitosis through ubiquitin-mediated proteolysis by the SCF ubiquitin ligase complex containing the F-box protein BTRC. This degradation is necessary for the activation of APC in late mitosis and subsequent mitotic progression. Phosphorylated by RPS6KA2; increases and stabilizes interaction with CDC20. In terms of processing, ubiquitinated by the SCF(BTRC) complex following phosphorylation by PLK1. Undergoes both 'Lys-11' and 'Lys-48'-linked polyubiquitination by APC-FZR1 complex leading to degradation by proteasome during G1 phase. Degraded through the SCF(BTRC) complex; degradation occurs during oocyte maturation, between germinal vesicle breakdown (GVBD) and meiosis I, and is required for the meiosis I-meiosis II transition.

It localises to the nucleus. Its subcellular location is the cytoplasm. The protein localises to the cytoskeleton. The protein resides in the spindle. Its pathway is protein modification; protein ubiquitination. Functionally, regulator of APC activity during mitotic and meiotic cell cycle. During mitotic cell cycle plays a role as both substrate and inhibitor of APC-FZR1 complex. During G1 phase, plays a role as substrate of APC-FZR1 complex E3 ligase. Then switches as an inhibitor of APC-FZR1 complex during S and G2 leading to cell-cycle commitment. As APC inhibitor, prevents the degradation of APC substrates at multiple levels: by interacting with APC and blocking access of APC substrates to the D-box coreceptor, formed by FZR1 and ANAPC10; by suppressing ubiquitin ligation and chain elongation by APC by preventing the UBE2C and UBE2S activities. Plays a role in genome integrity preservation by coordinating DNA replication with mitosis through APC inhibition in interphase to stabilize CCNA2 and GMNN in order to promote mitosis and prevent rereplication and DNA damage-induced cellular senescence. During oocyte maturation, plays a role in meiosis through inactivation of APC-FZR1 complex. Inhibits APC through RPS6KA2 interaction that increases FBXO5 affiniy for CDC20 leading to the metaphase arrest of the second meiotic division before fertilization. Controls entry into the first meiotic division through inactivation of APC-FZR1 complex. Promotes migration and osteogenic differentiation of mesenchymal stem cells. The sequence is that of F-box only protein 5 from Homo sapiens (Human).